The chain runs to 124 residues: Small ribosomal subunit protein uS12 (124 aa).

The tract at residues 1–30 (MPTIQQLVRKGRQDKVAKTKTAALKGSPQR) is disordered. At D89 the chain carries 3-methylthioaspartic acid. Residues 102–124 (ADTQGVKNRKQARSRYGAKKEKS) are disordered. The span at 108–118 (KNRKQARSRYG) shows a compositional bias: basic residues.

This sequence belongs to the universal ribosomal protein uS12 family. Part of the 30S ribosomal subunit. Contacts proteins S8 and S17. May interact with IF1 in the 30S initiation complex.

With S4 and S5 plays an important role in translational accuracy. Its function is as follows. Interacts with and stabilizes bases of the 16S rRNA that are involved in tRNA selection in the A site and with the mRNA backbone. Located at the interface of the 30S and 50S subunits, it traverses the body of the 30S subunit contacting proteins on the other side and probably holding the rRNA structure together. The combined cluster of proteins S8, S12 and S17 appears to hold together the shoulder and platform of the 30S subunit. This is Small ribosomal subunit protein uS12 from Saccharopolyspora erythraea (strain ATCC 11635 / DSM 40517 / JCM 4748 / NBRC 13426 / NCIMB 8594 / NRRL 2338).